A 469-amino-acid chain; its full sequence is 3-isopropylmalate dehydratase large subunit (469 aa).

The [4Fe-4S] cluster site is built by C346, C406, and C409.

Belongs to the aconitase/IPM isomerase family. LeuC type 1 subfamily. In terms of assembly, heterodimer of LeuC and LeuD. [4Fe-4S] cluster serves as cofactor.

It catalyses the reaction (2R,3S)-3-isopropylmalate = (2S)-2-isopropylmalate. The protein operates within amino-acid biosynthesis; L-leucine biosynthesis; L-leucine from 3-methyl-2-oxobutanoate: step 2/4. Catalyzes the isomerization between 2-isopropylmalate and 3-isopropylmalate, via the formation of 2-isopropylmaleate. This is 3-isopropylmalate dehydratase large subunit from Lysinibacillus sphaericus (strain C3-41).